The sequence spans 462 residues: Alkaline ceramidase TOD1 (462 aa).

Over 1–18 (MGKFITTTLSPPLYARSK) the chain is Cytoplasmic. A helical membrane pass occupies residues 19 to 39 (LLCFSLLYLFSTIFLFLYVSL). Over 40-462 (SRNQCIFRYS…CKNYLTDMWG (423 aa)) the chain is Lumenal. 3 N-linked (GlcNAc...) asparagine glycosylation sites follow: Asn-121, Asn-132, and Asn-449.

It belongs to the alkaline ceramidase family. As to expression, preferentially expressed in pollen grains, pollen tubes and silique guard cells, but barely detectable in roots, stems and leaves.

The protein resides in the golgi apparatus membrane. The enzyme catalyses an N-acylsphing-4-enine + H2O = sphing-4-enine + a fatty acid. The protein operates within lipid metabolism. Its function is as follows. Endoplasmic reticulum ceramidase that catalyzes the hydrolysis of ceramides into sphingosine and free fatty acids at alkaline pH (e.g. pH 9.5). Inactive on phytoceramide. Involved in the regulation of turgor pressure in guard cells and pollen tubes. The sequence is that of Alkaline ceramidase TOD1 from Arabidopsis thaliana (Mouse-ear cress).